A 669-amino-acid chain; its full sequence is Glutaminase kidney isoform, mitochondrial (669 aa).

The transit peptide at 1–54 (MMRLRGSGMLRDLLLRSPAGVSATLRRAQPLVTLCRRPRGGGRPAAGPAAAARL) directs the protein to the mitochondrion. Residues 68 to 118 (LARGLSSSPSEILQELGKGSTHPQPGVSPPAAPAAPGPKDGPGETDAFGNS) are disordered. The span at 93 to 103 (GVSPPAAPAAP) shows a compositional bias: pro residues. N6-succinyllysine is present on residues Lys-130 and Lys-164. Position 286 (Ser-286) interacts with substrate. Lys-311 is modified (N6-acetyllysine). The tract at residues 315–322 (GLRFNKLF) is highly mobile activation loop. Positions 335, 381, 388, 414, 466, and 484 each coordinate substrate. ANK repeat units follow at residues 585–614 (DSRT…VNPF) and 619–648 (WNNT…QYTP). Residues 647 to 669 (TPQGDSDNGKENQTVHKNLDGLL) are disordered. Ser-652 is subject to Phosphoserine. The span at 653-669 (DNGKENQTVHKNLDGLL) shows a compositional bias: basic and acidic residues.

This sequence belongs to the glutaminase family. Homotetramer, dimer of dimers. The tetramers can assemble into rod-like oligomers (in vitro), but the physiological significance of this is not clear. Interacts with RAF1 and MAP2K2. Interacts with ATCAY; the interaction is direct and may control GLS localization, negatively regulating its activity. In terms of processing, synthesized as a 74-kDa cytosolic precursor which is proteolytically processed by the mitochondrial-processing peptidase (MPP) via a 72-kDa intermediate to yield the mature mitochondrial 68- and 65-kDa subunits. Isoform 1 and isoform 3 are detected in brain cortex. Isoform 3 is highly expressed in astrocytoma, ganglioglioma and ependymoma. Isoform 1 is highly expressed in brain and kidney, but not detected in liver. Isoform 3 is highly expressed in heart and pancreas, detected at lower levels in placenta, lung, pancreas and kidney, but is not detected in liver. Isoform 2 is expressed in cardiac and skeletal muscle.

The protein localises to the mitochondrion. It is found in the cytoplasm. It localises to the cytosol. The protein resides in the mitochondrion matrix. It catalyses the reaction L-glutamine + H2O = L-glutamate + NH4(+). Its activity is regulated as follows. Isoform 1 and isoform 3 are activated by phosphate. Inhibited by BPTES. BPTES binds between subunits and favors dissociation of the tetramer into dimers. Inhibited by 6-diazo-5-oxo-L-norleucine (DON). Enzyme activity is stimulated by phosphorylation. Functionally, catalyzes the first reaction in the primary pathway for the renal catabolism of glutamine. Plays a role in maintaining acid-base homeostasis. Regulates the levels of the neurotransmitter glutamate, the main excitatory neurotransmitter in the brain. Lacks catalytic activity. The sequence is that of Glutaminase kidney isoform, mitochondrial (GLS) from Homo sapiens (Human).